We begin with the raw amino-acid sequence, 87 residues long: Mu-theraphotoxin-Cg1a (87 aa).

An N-terminal signal peptide occupies residues 1–21 (MKVLVLITLAVLGAMFVWTSA). A propeptide spanning residues 22 to 50 (AELEERGSDQRDSPAWVKSMERIFQSEER) is cleaved from the precursor. 3 disulfides stabilise this stretch: Cys52–Cys66, Cys59–Cys71, and Cys65–Cys79.

Belongs to the neurotoxin 10 (Hwtx-1) family. 39 (Jztx-34) subfamily. In terms of tissue distribution, expressed by the venom gland.

The protein localises to the secreted. In terms of biological role, potent and selective inhibitor of hNav1.7/SCN9A (IC(50)=610 nM). Also shows a weak activity towards Nav1.3/SCN3A (IC(50)=7950 nM). In addition, inhibits voltage-gated potassium channels (Kv) in rat DRG neurons. It does not alter the voltage dependence of activation, but it causes a small hyperpolarizing shift in the steady-state inactivations of Nav1.7/SNC9A. Chimera experiments show that the toxin binds to the DIIS3-S4 linker (site 4) of Nav1.7/SCN9A, whereas Nav1.7/SCN9A Asp-827 residue is shown by substitution experiments to be critical for its sensitivity. The toxin traps the domain II voltage sensor in the closed configuration, and not in an outward position. In vivo, shows analgesic activity in three rodent pain models (formalin-induced, acid-induced, and thermal). The polypeptide is Mu-theraphotoxin-Cg1a (Chilobrachys guangxiensis (Chinese earth tiger tarantula)).